Here is a 213-residue protein sequence, read N- to C-terminus: Ribonuclease HII (213 aa).

The RNase H type-2 domain maps to 1 to 206; sequence MICGVDEAGK…VSTLLAKKTQ (206 aa). Residues Asp6, Glu7, and Asp101 each coordinate a divalent metal cation.

The protein belongs to the RNase HII family. The cofactor is Mn(2+). It depends on Mg(2+) as a cofactor.

The protein localises to the cytoplasm. It carries out the reaction Endonucleolytic cleavage to 5'-phosphomonoester.. In terms of biological role, endonuclease that specifically degrades the RNA of RNA-DNA hybrids. This Methanoregula boonei (strain DSM 21154 / JCM 14090 / 6A8) protein is Ribonuclease HII.